The primary structure comprises 230 residues: Type II restriction enzyme MjaV (230 aa).

It catalyses the reaction Endonucleolytic cleavage of DNA to give specific double-stranded fragments with terminal 5'-phosphates.. Functionally, a P subtype restriction enzyme that recognizes the double-stranded sequence 5'-GTAC-3'; the cleavage site is unknown. The chain is Type II restriction enzyme MjaV (mjaVR) from Methanocaldococcus jannaschii (strain ATCC 43067 / DSM 2661 / JAL-1 / JCM 10045 / NBRC 100440) (Methanococcus jannaschii).